Consider the following 138-residue polypeptide: Protein NrdI (138 aa).

The protein belongs to the NrdI family.

Functionally, probably involved in ribonucleotide reductase function. This chain is Protein NrdI, found in Beutenbergia cavernae (strain ATCC BAA-8 / DSM 12333 / CCUG 43141 / JCM 11478 / NBRC 16432 / NCIMB 13614 / HKI 0122).